Here is a 129-residue protein sequence, read N- to C-terminus: D-ribose pyranase (129 aa).

Histidine 20 acts as the Proton donor in catalysis. Substrate-binding positions include aspartate 28, histidine 96, and 118-120; that span reads YAN.

The protein belongs to the RbsD / FucU family. RbsD subfamily. As to quaternary structure, homodecamer.

The protein resides in the cytoplasm. It catalyses the reaction beta-D-ribopyranose = beta-D-ribofuranose. The protein operates within carbohydrate metabolism; D-ribose degradation; D-ribose 5-phosphate from beta-D-ribopyranose: step 1/2. In terms of biological role, catalyzes the interconversion of beta-pyran and beta-furan forms of D-ribose. This is D-ribose pyranase from Streptomyces avermitilis (strain ATCC 31267 / DSM 46492 / JCM 5070 / NBRC 14893 / NCIMB 12804 / NRRL 8165 / MA-4680).